Consider the following 2286-residue polypeptide: DNA polymerase epsilon catalytic subunit A (2286 aa).

The interval 1–30 is disordered; that stretch reads MSLRSGGRRRADPGADGEASRDDGATSSVS. Residues 9-24 are compositionally biased toward basic and acidic residues; it reads RRADPGADGEASRDDG. A phosphoserine mark is found at S1184, S1297, S1317, and S1940. A disordered region spans residues 1939–1969; sequence DSQKAGGAEDEQENEDDEEERDGEEEEEAEE. Over residues 1946-1969 the composition is skewed to acidic residues; that stretch reads AEDEQENEDDEEERDGEEEEEAEE. The Zn(2+) site is built by C2158, C2161, C2187, and C2190. The CysA-type zinc finger occupies 2158 to 2190; it reads CRSCNFCRDLDLCKDSSFSEDGAVLPQWLCSNC. [4Fe-4S] cluster is bound by residues C2221, C2224, C2236, and C2238. Residues 2221-2238 carry the CysB motif motif; that stretch reads CLKCRGVKETSMPVYCSC.

It belongs to the DNA polymerase type-B family. Component of the DNA polymerase epsilon complex consisting of four subunits: the catalytic subunit POLE and the accessory subunits POLE2, POLE3 and POLE4. Interacts with RAD17 and TOPBP1.

It localises to the nucleus. It catalyses the reaction DNA(n) + a 2'-deoxyribonucleoside 5'-triphosphate = DNA(n+1) + diphosphate. Catalytic component of the DNA polymerase epsilon complex. Participates in chromosomal DNA replication. Required during synthesis of the leading DNA strands at the replication fork, binds at/or near replication origins and moves along DNA with the replication fork. Has 3'-5' proofreading exonuclease activity that corrects errors arising during DNA replication. Involved in DNA synthesis during DNA repair. Along with DNA polymerase POLD1 and DNA polymerase POLK, has a role in excision repair (NER) synthesis following UV irradiation. This chain is DNA polymerase epsilon catalytic subunit A, found in Homo sapiens (Human).